The chain runs to 215 residues: Adenylyl-sulfate kinase (215 aa).

Position 46–53 (46–53 (GLSGAGKS)) interacts with ATP. Catalysis depends on S120, which acts as the Phosphoserine intermediate.

The protein belongs to the APS kinase family.

It catalyses the reaction adenosine 5'-phosphosulfate + ATP = 3'-phosphoadenylyl sulfate + ADP + H(+). The protein operates within sulfur metabolism; hydrogen sulfide biosynthesis; sulfite from sulfate: step 2/3. Its function is as follows. Catalyzes the synthesis of activated sulfate. In Vibrio cholerae serotype O1 (strain ATCC 39315 / El Tor Inaba N16961), this protein is Adenylyl-sulfate kinase (cysC).